The sequence spans 128 residues: Glycine cleavage system H protein (128 aa).

Positions 24–106 (VYSVGITEHA…YTDGWLFSIK (83 aa)) constitute a Lipoyl-binding domain. The residue at position 65 (Lys-65) is an N6-lipoyllysine.

Belongs to the GcvH family. The glycine cleavage system is composed of four proteins: P, T, L and H. (R)-lipoate serves as cofactor.

The glycine cleavage system catalyzes the degradation of glycine. The H protein shuttles the methylamine group of glycine from the P protein to the T protein. The protein is Glycine cleavage system H protein of Yersinia pseudotuberculosis serotype O:1b (strain IP 31758).